A 201-amino-acid chain; its full sequence is Ribosome maturation factor RimP (201 aa).

The protein belongs to the RimP family.

The protein resides in the cytoplasm. Required for maturation of 30S ribosomal subunits. This is Ribosome maturation factor RimP from Rhizobium johnstonii (strain DSM 114642 / LMG 32736 / 3841) (Rhizobium leguminosarum bv. viciae).